A 35-amino-acid polypeptide reads, in one-letter code: ACLGFGEKCNPSNDKCCKSSSLVCSQKHKWCKYGW.

Cystine bridges form between C2–C17, C9–C24, and C16–C31.

Belongs to the neurotoxin 10 (Hwtx-1) family. 10 (haplotoxin-1) subfamily. In terms of tissue distribution, expressed by the venom gland.

It is found in the secreted. Its function is as follows. Spider venom neurotoxin that blocks voltage-gated sodium channel Nav1.3/SCN3A in human (IC(50)=1 uM) and rat (IC(50)=1 uM). The protein is Beta-theraphotoxin-Hlv1a of Cyriopagopus lividus (Cobalt blue tarantula).